Here is a 2224-residue protein sequence, read N- to C-terminus: Multifunctional protein r (2224 aa).

Positions 1–369 are GATase (Glutamine amidotransferase); that stretch reads MASTDCYLAL…PQDTEFLFDV (369 aa). L-glutamine-binding residues include serine 55, glycine 240, and glycine 242. In terms of domain architecture, Glutamine amidotransferase type-1 spans 195–380; that stretch reads RIAILDCGLK…MESIQQKDLT (186 aa). Cysteine 269 acts as the Nucleophile; for GATase activity in catalysis. Leucine 270, glutamine 273, asparagine 311, glycine 313, and tyrosine 314 together coordinate L-glutamine. Residues histidine 353 and glutamate 355 each act as for GATase activity in the active site. Residues 370 to 415 form a linker region; that stretch reads FMESIQQKDLTIPQLIEQRLRPTTPAIDSAPVMPRKVLILGSGGLS. Positions 416–1470 are CPSase (Carbamoyl-phosphate synthase); that stretch reads IGQAGEFDYS…KPPMKTHTDC (1055 aa). Residues arginine 525, arginine 565, glycine 571, glycine 572, lysine 602, glutamate 609, glycine 635, isoleucine 636, histidine 637, glutamine 678, and glutamate 692 each contribute to the ATP site. ATP-grasp domains are found at residues 529-721 and 1066-1257; these read AERV…KLAL and SRML…RAIV. Glutamine 678, glutamate 692, and asparagine 694 together coordinate Mg(2+). Mn(2+) contacts are provided by glutamine 678, glutamate 692, and asparagine 694. ATP contacts are provided by arginine 1102, lysine 1141, leucine 1143, glutamate 1148, glycine 1173, valine 1174, histidine 1175, serine 1176, glutamine 1216, and glutamate 1228. Mg(2+) is bound by residues glutamine 1216, glutamate 1228, and asparagine 1230. Glutamine 1216, glutamate 1228, and asparagine 1230 together coordinate Mn(2+). The MGS-like domain occupies 1322-1477; the sequence is FQIPKNAVLL…TDCMTSRRIV (156 aa). Positions 1471-1484 are linker; sequence MTSRRIVKLPGFID. Residues 1485–1800 are DHOase (dihydroorotase); the sequence is VHVHLREPGA…GTKVKGRVHR (316 aa). Histidine 1486 and histidine 1488 together coordinate Zn(2+). (S)-dihydroorotate is bound by residues arginine 1490 and asparagine 1520. Zn(2+)-binding residues include lysine 1571, histidine 1605, cysteine 1628, histidine 1629, and glutamate 1652. Lysine 1571 bears the N6-carboxylysine mark. Residue arginine 1676 participates in (S)-dihydroorotate binding. A Zn(2+)-binding site is contributed by aspartate 1701. Aspartate 1701 functions as the For DHOase activity in the catalytic mechanism. Histidine 1705 and proline 1717 together coordinate (S)-dihydroorotate. A linker region spans residues 1801 to 1912; it reads VVLRGEVAFV…QRTTNSNPVA (112 aa). Positions 1821 to 1843 are disordered; sequence GQNVRPKQSPLASEASQDLLPSD. A phosphoserine mark is found at serine 1883, serine 1885, serine 1892, and serine 1894. Positions 1913-2224 are ATCase (Aspartate transcarbamylase); sequence HSLMGKHILA…MVVGGRNTAL (312 aa). Residues arginine 1970 and threonine 1971 each coordinate carbamoyl phosphate. Lysine 1998 serves as a coordination point for L-aspartate. Arginine 2019, histidine 2047, and glutamine 2050 together coordinate carbamoyl phosphate. L-aspartate contacts are provided by arginine 2080 and arginine 2141. Carbamoyl phosphate is bound by residues leucine 2180 and proline 2181.

The protein in the N-terminal section; belongs to the CarA family. This sequence in the 2nd section; belongs to the CarB family. It in the 3rd section; belongs to the metallo-dependent hydrolases superfamily. DHOase family. CAD subfamily. In the C-terminal section; belongs to the aspartate/ornithine carbamoyltransferase superfamily. ATCase family. Mg(2+) serves as cofactor. Mn(2+) is required as a cofactor. It depends on Zn(2+) as a cofactor.

Its subcellular location is the cytoplasm. The enzyme catalyses hydrogencarbonate + L-glutamine + 2 ATP + H2O = carbamoyl phosphate + L-glutamate + 2 ADP + phosphate + 2 H(+). The catalysed reaction is L-glutamine + H2O = L-glutamate + NH4(+). It catalyses the reaction hydrogencarbonate + NH4(+) + 2 ATP = carbamoyl phosphate + 2 ADP + phosphate + 2 H(+). It carries out the reaction carbamoyl phosphate + L-aspartate = N-carbamoyl-L-aspartate + phosphate + H(+). The enzyme catalyses (S)-dihydroorotate + H2O = N-carbamoyl-L-aspartate + H(+). Its pathway is pyrimidine metabolism; UMP biosynthesis via de novo pathway; (S)-dihydroorotate from bicarbonate: step 1/3. The protein operates within pyrimidine metabolism; UMP biosynthesis via de novo pathway; (S)-dihydroorotate from bicarbonate: step 2/3. It functions in the pathway pyrimidine metabolism; UMP biosynthesis via de novo pathway; (S)-dihydroorotate from bicarbonate: step 3/3. Its function is as follows. Multifunctional protein that encodes the first 3 enzymatic activities of the de novo pyrimidine pathway: carbamoylphosphate synthetase (CPSase; EC 6.3.5.5), aspartate transcarbamylase (ATCase; EC 2.1.3.2) and dihydroorotase (DHOase; EC 3.5.2.3). The CPSase-function is accomplished in 2 steps, by a glutamine-dependent amidotransferase activity (GATase) that binds and cleaves glutamine to produce ammonia, followed by an ammonium-dependent carbamoyl phosphate synthetase, which reacts with the ammonia, hydrogencarbonate and ATP to form carbamoyl phosphate. The endogenously produced carbamoyl phosphate is sequestered and channeled to the ATCase active site. ATCase then catalyzes the formation of carbamoyl-L-aspartate from L-aspartate and carbamoyl phosphate. In the last step, DHOase catalyzes the cyclization of carbamoyl aspartate to dihydroorotate. The chain is Multifunctional protein r (r) from Drosophila melanogaster (Fruit fly).